A 130-amino-acid chain; its full sequence is Small ribosomal subunit protein uS9 (130 aa).

It belongs to the universal ribosomal protein uS9 family.

The polypeptide is Small ribosomal subunit protein uS9 (Streptococcus pyogenes serotype M1).